The chain runs to 206 residues: Probable GTP-binding protein EngB (206 aa).

The region spanning 25–198 (SRAEVAFAGR…AVRIEGWLAP (174 aa)) is the EngB-type G domain. Residues Ser-40 and Thr-62 each contribute to the Mg(2+) site.

This sequence belongs to the TRAFAC class TrmE-Era-EngA-EngB-Septin-like GTPase superfamily. EngB GTPase family. Mg(2+) is required as a cofactor.

Necessary for normal cell division and for the maintenance of normal septation. The protein is Probable GTP-binding protein EngB of Thiobacillus denitrificans (strain ATCC 25259 / T1).